The primary structure comprises 167 residues: Gem-associated protein 6 (167 aa).

In terms of domain architecture, Sm spans 7–74 (KGPLEWQDYI…VQTVETMNEG (68 aa)). In terms of domain architecture, AD spans 69–167 (ETMNEGDHRV…LIEGHLTASQ (99 aa)). Phosphoserine is present on residues Ser95 and Ser166.

In terms of assembly, part of the core SMN complex that contains SMN1, GEMIN2/SIP1, DDX20/GEMIN3, GEMIN4, GEMIN5, GEMIN6, GEMIN7, GEMIN8 and STRAP/UNRIP. Part of the SMN-Sm complex that contains SMN1, GEMIN2/SIP1, DDX20/GEMIN3, GEMIN4, GEMIN5, GEMIN6, GEMIN7, GEMIN8, STRAP/UNRIP and the Sm proteins SNRPB, SNRPD1, SNRPD2, SNRPD3, SNRPE, SNRPF and SNRPG. Interacts with GEMIN7; the interaction is direct. Interacts with GEMIN8; the interaction is direct. Interacts with SNRPB, SNRPD2, SNRPD3 and SNRPE; the interaction is direct.

The protein localises to the nucleus. It localises to the nucleoplasm. Its subcellular location is the gem. It is found in the cytoplasm. Its function is as follows. The SMN complex catalyzes the assembly of small nuclear ribonucleoproteins (snRNPs), the building blocks of the spliceosome, and thereby plays an important role in the splicing of cellular pre-mRNAs. Most spliceosomal snRNPs contain a common set of Sm proteins SNRPB, SNRPD1, SNRPD2, SNRPD3, SNRPE, SNRPF and SNRPG that assemble in a heptameric protein ring on the Sm site of the small nuclear RNA to form the core snRNP (Sm core). In the cytosol, the Sm proteins SNRPD1, SNRPD2, SNRPE, SNRPF and SNRPG are trapped in an inactive 6S pICln-Sm complex by the chaperone CLNS1A that controls the assembly of the core snRNP. To assemble core snRNPs, the SMN complex accepts the trapped 5Sm proteins from CLNS1A forming an intermediate. Binding of snRNA inside 5Sm triggers eviction of the SMN complex, thereby allowing binding of SNRPD3 and SNRPB to complete assembly of the core snRNP. In Homo sapiens (Human), this protein is Gem-associated protein 6 (GEMIN6).